The chain runs to 151 residues: GTP-dependent dephospho-CoA kinase (151 aa).

Residues Asp-30, Val-31, Asp-49, Lys-51, and Glu-104 each contribute to the GTP site.

It belongs to the GTP-dependent DPCK family.

The catalysed reaction is 3'-dephospho-CoA + GTP = GDP + CoA + H(+). It participates in cofactor biosynthesis; coenzyme A biosynthesis. Its function is as follows. Catalyzes the GTP-dependent phosphorylation of the 3'-hydroxyl group of dephosphocoenzyme A to form coenzyme A (CoA). The protein is GTP-dependent dephospho-CoA kinase of Cenarchaeum symbiosum (strain A).